The chain runs to 160 residues: Protein MGF 300-2R (160 aa).

This sequence belongs to the asfivirus MGF 300 family.

In terms of biological role, plays a role in virus cell tropism, and may be required for efficient virus replication in macrophages. The protein is Protein MGF 300-2R of Ornithodoros (relapsing fever ticks).